The sequence spans 262 residues: Transmembrane protein 81 (262 aa).

An N-terminal signal peptide occupies residues 1–30; it reads MKAVATVFICGSLVLITYLPLVVTSPQTLA. Over 31 to 225 the chain is Extracellular; it reads IPEKLRQAVG…HLPGWRKKVS (195 aa). The N-linked (GlcNAc...) asparagine glycan is linked to Asn45. The Ig-like domain maps to 83–171; it reads TNWICGMLHF…VQQLKNLKLV (89 aa). Cys104 and Cys160 are disulfide-bonded. Asn211 carries an N-linked (GlcNAc...) asparagine glycan. The helical transmembrane segment at 226–246 threads the bilayer; that stretch reads LALGVGIAAGVVGGVLVNVAL. Topologically, residues 247–262 are cytoplasmic; it reads CRVLGGTGGNGNLSSL.

As to quaternary structure, forms a complex with IZUMO1 and SPACA6 on spermatocyte cell membrane required for fertilization.

It localises to the cell membrane. Its function is as follows. Essential fertilization factor required for male fertility. Part of a conserved trimeric sperm complex with the essential fertilization factors IZUMO1 and SPACA6 which bridges sperm and oocyte membranes during fertilization by binding to IZUMO1R/JUNO on the oocyte. The polypeptide is Transmembrane protein 81 (Tmem81) (Rattus norvegicus (Rat)).